The chain runs to 437 residues: MTVFHFTGIKGSGMSPLAQILFDAGEQVQGSDVDKYFFTEQPLRERNIPIFTFNADNIKEGMTVIAGNAFPDDHPELIRAREIGVEIIRYHKFLGEYIGNYISIAITGAHGKTSTTGLMAHVVGGYKPTSYLIGDGTGAGHANADFFVMEACEYRRHFLAYNPDYAVMTNIDFDHPDYFANIEDVYSAFQSLALQVKKAIIACGDDEQLQRIQAKVPVVYYGFGSENDFEARNVEKTTEGTKFDVFVRNEFYSTFFIPLFGDHAILNTLAVITLCEYEGISPDIIQDRLHTYKGVKRRFTETDIGDNVLIDDYAHHPTEIRATIQSARQKFPDRELVAIFQPHTFTRTQAFLQDFADSLSLADTAYLCDIFGSARETQGALSIQDLASLIEGSAVITTEGIDILTKHQGAVFLFMGAGDVHKFQDAFEAVLKNDETA.

108 to 114 (GAHGKTS) contacts ATP.

It belongs to the MurCDEF family.

It is found in the cytoplasm. The catalysed reaction is UDP-N-acetyl-alpha-D-muramate + L-alanine + ATP = UDP-N-acetyl-alpha-D-muramoyl-L-alanine + ADP + phosphate + H(+). The protein operates within cell wall biogenesis; peptidoglycan biosynthesis. Functionally, cell wall formation. This chain is UDP-N-acetylmuramate--L-alanine ligase, found in Lysinibacillus sphaericus (strain C3-41).